Reading from the N-terminus, the 299-residue chain is GTPase Era (299 aa).

The 171-residue stretch at 5–175 (RSGFVCFVGR…TNVLVSQLPP (171 aa)) folds into the Era-type G domain. The segment at 13-20 (GRPNTGKS) is G1. 13–20 (GRPNTGKS) is a binding site for GTP. A G2 region spans residues 39–43 (QTTRH). Positions 60–63 (DTPG) are G3. Residues 60–64 (DTPGL) and 124–127 (TKID) each bind GTP. A G4 region spans residues 124-127 (TKID). The tract at residues 154–156 (VSA) is G5. The region spanning 206–285 (VRDELPHSLA…YLDLRVKIAK (80 aa)) is the KH type-2 domain.

Belongs to the TRAFAC class TrmE-Era-EngA-EngB-Septin-like GTPase superfamily. Era GTPase family. As to quaternary structure, monomer. Stays in the monomer conformation, irrespective of the presence of GTP.

It localises to the cell envelope. The protein localises to the secreted. Its subcellular location is the cell wall. Its activity is regulated as follows. Co-purified with RNA upon overexpression in E.coli, but RNAs do not appear to influence the GTPase activity. Exhibits GTPase activity. Binds RNA but is probably not involved in ribosome assembly in mycobacteria. Cannot use ATP. This is GTPase Era from Mycolicibacterium smegmatis (strain ATCC 700084 / mc(2)155) (Mycobacterium smegmatis).